The primary structure comprises 620 residues: Extensin (620 aa).

Positions 1-20 (MKLSTLFALVLLLQSTAILS) are cleaved as a signal peptide. The segment covering 34–45 (LPPPVTSQPPPS) has biased composition (pro residues). The segment at 34-620 (LPPPVTSQPP…PPYGLLLSTP (587 aa)) is disordered. The stretch at 70 to 73 (HAPP) is one H-A-P-P repeat. Residues 106 to 129 (NPPPSPVISPSHPPPSYGAPPPSH) show a composition bias toward pro residues. Positions 145 to 163 (SHGHAPPSGGHTPPRGQHP) are enriched in low complexity. An H-A-P-P repeat occupies 148–151 (HAPP). Positions 164–177 (PSHRRPSPPSRHGH) are enriched in basic residues. A compositionally biased stretch (pro residues) spans 178–219 (PPPPTYAQPPPTPIYSPSPQVQPPPTYSPPPPTHVQPTPSPP). Positions 205–620 (SPPPPTHVQP…PPYGLLLSTP (416 aa)) are contains the Ser-Pro(4) repeats. 2 repeat units span residues 229–235 (THRHAPP) and 236–242 (THRHAPP). Residues 229–241 (THRHAPPTHRHAP) are compositionally biased toward basic residues. A 2 X 7 AA tandem repeats of T-H-R-H-A-P-P region spans residues 229 to 242 (THRHAPPTHRHAPP). Pro residues-rich tracts occupy residues 251 to 552 (HLPP…PPHW) and 562 to 613 (GQPP…PPPY). The 3 X approximate tandem repeats stretch occupies residues 499–600 (PPTFSPPPPR…PTPTYGQPPS (102 aa)).

Post-translationally, hydroxylated on proline residues in the S-P-P-P-P repeat. In terms of processing, O-glycosylated on hydroxyprolines. In terms of tissue distribution, expressed in the tip of the emerging lateral roots.

Its subcellular location is the secreted. The protein resides in the primary cell wall. Has a specialized structural function, possibly in the mechanical penetration of the cortex and epidermis of the main root. This chain is Extensin (HRGPNT3), found in Nicotiana tabacum (Common tobacco).